A 726-amino-acid chain; its full sequence is Catalase-peroxidase (726 aa).

The disordered stretch occupies residues 1–25; sequence MDAKTDDSAGKCPFTGGGRRGHRNR. Residues 96-218 constitute a cross-link (tryptophyl-tyrosyl-methioninium (Trp-Tyr) (with M-244)); that stretch reads WHSAGTYRIT…LAAVQMGLIY (123 aa). Catalysis depends on histidine 97, which acts as the Proton acceptor. A cross-link (tryptophyl-tyrosyl-methioninium (Tyr-Met) (with W-96)) is located at residues 218–244; that stretch reads YVNPEGPNGNPDPVAAAKDIRETFYRM. Histidine 259 lines the heme b pocket.

Belongs to the peroxidase family. Peroxidase/catalase subfamily. As to quaternary structure, homodimer or homotetramer. The cofactor is heme b. In terms of processing, formation of the three residue Trp-Tyr-Met cross-link is important for the catalase, but not the peroxidase activity of the enzyme.

It carries out the reaction H2O2 + AH2 = A + 2 H2O. It catalyses the reaction 2 H2O2 = O2 + 2 H2O. Its function is as follows. Bifunctional enzyme with both catalase and broad-spectrum peroxidase activity. The polypeptide is Catalase-peroxidase (Chelativorans sp. (strain BNC1)).